The primary structure comprises 3707 residues: CUB and sushi domain-containing protein 3 (3707 aa).

The span at 1–21 (MKGSRKGESRAKESKPREPGT) shows a compositional bias: basic and acidic residues. Positions 1–22 (MKGSRKGESRAKESKPREPGTR) are disordered. At 1–42 (MKGSRKGESRAKESKPREPGTRRCAKCGRLDFILKKKMGIKS) the chain is on the cytoplasmic side. The helical transmembrane segment at 43 to 63 (GFTFWNLVFLLTLSCVKGFIY) threads the bilayer. The Extracellular portion of the chain corresponds to 64–3630 (TCGGTLKGLN…NQPHGTNSSS (3567 aa)). Cystine bridges form between Cys-65–Cys-91, Cys-178–Cys-218, Cys-204–Cys-235, and Cys-241–Cys-267. In terms of domain architecture, CUB 1 spans 65–173 (CGGTLKGLNG…HGFKVYYEEL (109 aa)). Asn-73 and Asn-90 each carry an N-linked (GlcNAc...) asparagine glycan. The 62-residue stretch at 176–237 (SSCGNPGVPP…WDFPVPICRA (62 aa)) folds into the Sushi 1 domain. The CUB 2 domain maps to 241-345 (CGGTMRGSSG…RGFSAPYQGS (105 aa)). Positions 388 to 437 (HRLSEEQRVQVRSLSDSGLDPNTPEDQLSPHQADTQSTSRRPRNAEQIER) are disordered. Residues 411–426 (PEDQLSPHQADTQSTS) show a composition bias toward polar residues. The region spanning 484–545 (NLCPDPGEPE…WSDHRPVCKV (62 aa)) is the Sushi 2 domain. 6 disulfides stabilise this stretch: Cys-486-Cys-526, Cys-512-Cys-543, Cys-548-Cys-574, Cys-664-Cys-704, Cys-690-Cys-717, and Cys-721-Cys-747. One can recognise a CUB 3 domain in the interval 548-659 (CGSNLQGPSG…VGFKVNYKEI (112 aa)). The region spanning 662–719 (ESCGDPGTPLYGIREGDGFSNRDVLRFECQFGFELIGEKSIVCQENNQWSANIPICIF) is the Sushi 3 domain. Residues 721–829 (CLSNFTAPMG…RGFNITYNTF (109 aa)) enclose the CUB 4 domain. 2 N-linked (GlcNAc...) asparagine glycosylation sites follow: Asn-724 and Asn-823. The region spanning 832–893 (NECPDPGIPI…WSGPIPRCGA (62 aa)) is the Sushi 4 domain. Disulfide bonds link Cys-834/Cys-875, Cys-860/Cys-891, and Cys-895/Cys-921. Positions 895–1003 (CGGHFSAPSG…NGFKIHYESV (109 aa)) constitute a CUB 5 domain. Asn-966 carries an N-linked (GlcNAc...) asparagine glycan. Positions 1008 to 1065 (YSCLDPGIPVHGRRYGHDFSIGSTVSFSCDPGYRLSHEEPLLCEKNHWWSHPLPTCDA) constitute a Sushi 5 domain. Cystine bridges form between Cys-1010–Cys-1050, Cys-1036–Cys-1063, and Cys-1067–Cys-1093. Residues 1067 to 1177 (CGGDVRGPSG…EGFNITFSEY (111 aa)) enclose the CUB 6 domain. Residues Asn-1092, Asn-1126, and Asn-1171 are each glycosylated (N-linked (GlcNAc...) asparagine). In terms of domain architecture, Sushi 6 spans 1180 to 1239 (EPCEDPGIPQYGSRVGFSFGVGDTLTFSCSLGYRLEGSSEIICLGGGRRVWSAPLPRCVA). Disulfide bonds link Cys-1182-Cys-1222, Cys-1208-Cys-1237, and Cys-1241-Cys-1267. Residues 1241-1349 (CGASATNNEG…EGFQLVYTSF (109 aa)) form the CUB 7 domain. Residue Asn-1280 is glycosylated (N-linked (GlcNAc...) asparagine). The region spanning 1352 to 1412 (SHCEDPGIPQ…WDYPLPSCIA (61 aa)) is the Sushi 7 domain. Disulfide bonds link Cys-1354–Cys-1395, Cys-1381–Cys-1410, Cys-1414–Cys-1441, Cys-1528–Cys-1568, Cys-1554–Cys-1584, Cys-1588–Cys-1614, Cys-1701–Cys-1741, Cys-1727–Cys-1758, Cys-1762–Cys-1788, Cys-1878–Cys-1918, Cys-1904–Cys-1935, and Cys-1939–Cys-1965. A CUB 8 domain is found at 1414 to 1523 (CGGRFKGESS…SGFAIQFSSS (110 aa)). Positions 1526 to 1586 (TACRDPGVPM…WQPSPPVCIA (61 aa)) constitute a Sushi 8 domain. Residue Asn-1536 is glycosylated (N-linked (GlcNAc...) asparagine). The CUB 9 domain occupies 1588–1696 (CGGNLTGSSG…TGFHLEYKAK (109 aa)). Residues Asn-1591 and Asn-1709 are each glycosylated (N-linked (GlcNAc...) asparagine). The 62-residue stretch at 1699–1760 (ESCFDPGNIM…WNRVLPSCHA (62 aa)) folds into the Sushi 9 domain. The CUB 10 domain occupies 1762–1870 (CGSRSTGSEG…KGFHFVYQAV (109 aa)). The N-linked (GlcNAc...) asparagine glycan is linked to Asn-1781. In terms of domain architecture, Sushi 10 spans 1876–1937 (TQCSSVPEPR…WNDSLPTCIV (62 aa)). N-linked (GlcNAc...) asparagine glycosylation occurs at Asn-1929. The CUB 11 domain occupies 1939-2047 (CGGILTKRKG…AGFHLEYTAI (109 aa)). The N-linked (GlcNAc...) asparagine glycan is linked to Asn-2019. Positions 2050-2109 (DSCPEPQTPSSGIKVGDRYMVGDVVSFQCDQGYSLQGHSHITCMPGPVRRWNYPIPICLA) constitute a Sushi 11 domain. Disulfide bonds link Cys-2052/Cys-2092, Cys-2078/Cys-2107, and Cys-2111/Cys-2137. The 109-residue stretch at 2111-2219 (CGGAMSDFSG…QGFHIVYQAY (109 aa)) folds into the CUB 12 domain. Asn-2155 is a glycosylation site (N-linked (GlcNAc...) asparagine). In terms of domain architecture, Sushi 12 spans 2222 to 2281 (QSCPDPRPFRNGFVIGNDFTVGQTISFECFPGYTLIGNSALTCLHGVSRNWNHPLPRCEA). 36 disulfide bridges follow: Cys-2224–Cys-2264, Cys-2250–Cys-2279, Cys-2283–Cys-2309, Cys-2395–Cys-2437, Cys-2423–Cys-2452, Cys-2456–Cys-2484, Cys-2569–Cys-2610, Cys-2596–Cys-2627, Cys-2632–Cys-2674, Cys-2658–Cys-2689, Cys-2694–Cys-2739, Cys-2725–Cys-2754, Cys-2759–Cys-2799, Cys-2785–Cys-2812, Cys-2817–Cys-2857, Cys-2843–Cys-2870, Cys-2875–Cys-2915, Cys-2901–Cys-2928, Cys-2933–Cys-2977, Cys-2963–Cys-2990, Cys-2995–Cys-3035, Cys-3021–Cys-3048, Cys-3056–Cys-3096, Cys-3082–Cys-3109, Cys-3114–Cys-3155, Cys-3141–Cys-3168, Cys-3173–Cys-3215, Cys-3199–Cys-3228, Cys-3233–Cys-3273, Cys-3259–Cys-3286, Cys-3291–Cys-3331, Cys-3317–Cys-3344, Cys-3352–Cys-3393, Cys-3379–Cys-3406, Cys-3411–Cys-3453, and Cys-3438–Cys-3466. In terms of domain architecture, CUB 13 spans 2283–2394 (CGGNITAMNG…LSYHAYQLRV (112 aa)). N-linked (GlcNAc...) asparagine glycosylation is found at Asn-2286 and Asn-2291. The Sushi 13 domain occupies 2393–2454 (RVCQPPPPVP…MDGAPPVCQV (62 aa)). A CUB 14 domain is found at 2456–2567 (CPANELRLDS…KGFRIRYIAF (112 aa)). 15 Sushi domains span residues 2567–2629 (FYCS…ACQA), 2630–2691 (ISCG…RCVV), 2692–2756 (VTCP…YCQI), 2757–2814 (ISCG…RCLA), 2815–2872 (GHCG…SCVP), 2873–2930 (VSCG…VCKV), 2931–2992 (VNCS…ECIM), 2993–3050 (IDCG…HCSG), 3054–3111 (GTCG…ECKA), 3112–3170 (VQCG…NCTI), 3171–3230 (ISCG…TCRA), 3231–3288 (VTCS…QCLP), 3289–3346 (KFCG…HCIE), 3350–3408 (TSCE…ECIP), and 3409–3468 (HSCK…VCEA). The span at 3052–3065 (TTGTCGDPGTPGHG) shows a compositional bias: low complexity. The segment at 3052–3071 (TTGTCGDPGTPGHGSRQESD) is disordered. The helical transmembrane segment at 3631–3651 (VAIAILVPFFALIFAGFGFYL) threads the bilayer. Over 3652–3707 (YKQRTAPKTQYTGCSVHENNNGQAAFENPMYDTNAKSVEGKAVRFDPNLNTVCTMV) the chain is Cytoplasmic.

It belongs to the CSMD family. In terms of tissue distribution, expressed in the apical dendrites of postnatal hippocampal neurons (at protein level).

The protein resides in the cell membrane. Involved in dendrite development. This Mus musculus (Mouse) protein is CUB and sushi domain-containing protein 3 (Csmd3).